Consider the following 509-residue polypeptide: Pyruvate kinase (509 aa).

Serine 29 carries the phosphoserine modification. Substrate is bound at residue arginine 56. The K(+) site is built by asparagine 58 and serine 60. Position 58-61 (58-61 (NFSH)) interacts with ATP. Residue serine 63 is modified to Phosphoserine. K(+) is bound by residues aspartate 91 and threonine 92. ATP contacts are provided by arginine 98 and lysine 184. Glutamate 249 contacts Mg(2+). Substrate contacts are provided by glycine 272 and aspartate 273. Position 273 (aspartate 273) interacts with Mg(2+). Position 281 is a phosphoserine (serine 281). Threonine 305 serves as a coordination point for substrate. The residue at position 412 (serine 412) is a Phosphoserine.

Belongs to the pyruvate kinase family. As to quaternary structure, homotetramer. It depends on Mg(2+) as a cofactor. The cofactor is K(+).

The catalysed reaction is pyruvate + ATP = phosphoenolpyruvate + ADP + H(+). The protein operates within carbohydrate degradation; glycolysis; pyruvate from D-glyceraldehyde 3-phosphate: step 5/5. In Schizosaccharomyces pombe (strain 972 / ATCC 24843) (Fission yeast), this protein is Pyruvate kinase (pyk1).